We begin with the raw amino-acid sequence, 154 residues long: Methylglyoxal synthase (154 aa).

In terms of domain architecture, MGS-like spans 1–154; that stretch reads MELTTRTIAA…RYMQQRLDLK (154 aa). Substrate is bound by residues H19, K23, 45–48, and 65–66; these read TGTT and SG. The active-site Proton donor/acceptor is D71. H98 serves as a coordination point for substrate.

The protein belongs to the methylglyoxal synthase family.

It catalyses the reaction dihydroxyacetone phosphate = methylglyoxal + phosphate. Functionally, catalyzes the formation of methylglyoxal from dihydroxyacetone phosphate. The protein is Methylglyoxal synthase of Yersinia pseudotuberculosis serotype O:1b (strain IP 31758).